A 358-amino-acid chain; its full sequence is Trace amine-associated receptor 7a (358 aa).

The Extracellular segment spans residues 1 to 47 (MDKLVDHFLSDQSRTMNEDLFSATSTELCYENLNRSCVRSPYSPGPR). The N-linked (GlcNAc...) asparagine glycan is linked to Asn-34. 2 disulfides stabilise this stretch: Cys-37–Cys-201 and Cys-120–Cys-205. A helical transmembrane segment spans residues 48–68 (LILYAVFGFGAALAVCGNLLV). Residues 69–83 (MTSILHFRQLHSPAN) lie on the Cytoplasmic side of the membrane. A helical transmembrane segment spans residues 84-104 (FLVASLACADFLVGLTVMPFS). The Extracellular portion of the chain corresponds to 105–121 (TVRSVEGCWYFGESYCK). The helical transmembrane segment at 122 to 143 (FHSCFEGSFCYSSIFHLCFISV) threads the bilayer. The Cytoplasmic portion of the chain corresponds to 144 to 166 (DRYIAVSDPLTYPTRFTASVSGK). A helical transmembrane segment spans residues 167–187 (CITFSWLLSIIYSFSLLYTGA). Over 188–212 (NEAGLEDLVSVLTCVGGCQIAVNQS) the chain is Extracellular. Asn-210 is a glycosylation site (N-linked (GlcNAc...) asparagine). The helical transmembrane segment at 213–233 (WVFINFLLFLIPTLVMMTVYS) threads the bilayer. The Cytoplasmic portion of the chain corresponds to 234–274 (KIFLIAKQQAQNIEKMSKQTARASESYKDRVAKRERKAAKT). Residues 275 to 295 (LGIAVAAFLLSWLPYFIDSII) form a helical membrane-spanning segment. Over 296-309 (DAFLGFITPTYVYE) the chain is Extracellular. The chain crosses the membrane as a helical span at residues 310–333 (ILVWIAYYNSAMNPLIYAFFYPWF). Residues 334–358 (RKAIKLIVTGKILRENSSTTNLFPE) lie on the Cytoplasmic side of the membrane.

The protein belongs to the G-protein coupled receptor 1 family. In terms of tissue distribution, specifically expressed in neurons of the olfactory epithelium.

The protein resides in the cell membrane. In terms of biological role, olfactory receptor specific for N,N-dimethylalkylamines trace amines. Trace amine compounds are enriched in animal body fluids and act on trace amine-associated receptors (TAARs) to elicit both intraspecific and interspecific innate behaviors. Ligand-binding causes a conformation change that triggers signaling via G(s)-class of G alpha proteins (GNAL or GNAS). The protein is Trace amine-associated receptor 7a of Mus musculus (Mouse).